We begin with the raw amino-acid sequence, 285 residues long: 4-diphosphocytidyl-2-C-methyl-D-erythritol kinase (285 aa).

Lysine 12 is an active-site residue. 95-105 provides a ligand contact to ATP; that stretch reads PMGGGVGGGSS. Aspartate 137 is an active-site residue.

Belongs to the GHMP kinase family. IspE subfamily.

It catalyses the reaction 4-CDP-2-C-methyl-D-erythritol + ATP = 4-CDP-2-C-methyl-D-erythritol 2-phosphate + ADP + H(+). Its pathway is isoprenoid biosynthesis; isopentenyl diphosphate biosynthesis via DXP pathway; isopentenyl diphosphate from 1-deoxy-D-xylulose 5-phosphate: step 3/6. Its function is as follows. Catalyzes the phosphorylation of the position 2 hydroxy group of 4-diphosphocytidyl-2C-methyl-D-erythritol. In Actinobacillus pleuropneumoniae serotype 5b (strain L20), this protein is 4-diphosphocytidyl-2-C-methyl-D-erythritol kinase.